The primary structure comprises 485 residues: Silicon efflux transporter LSI3 (485 aa).

The next 5 helical transmembrane spans lie at 14 to 34, 37 to 57, 59 to 79, 106 to 126, and 180 to 200; these read VAFG…LPIG, AGAL…ADDA, ASID…GGYL, VCVV…CVVL, and FLLG…LMLL. The segment covering 233 to 242 has biased composition (basic and acidic residues); it reads ALNNNKKDDG. The segment at 233-261 is disordered; that stretch reads ALNNNKKDDGDAATPASPEDDDGGDAESM. Helical transmembrane passes span 283 to 303, 336 to 356, 377 to 397, 418 to 438, and 461 to 481; these read LFLK…YMLG, LLVF…TGLP, VLSV…TVLL, WLLL…GSAA, and HVIF…PLIG.

This sequence belongs to the arsenite-antimonite (ArsB) efflux (TC 2.A.45) family.

It is found in the cell membrane. In terms of biological role, silicon efflux transporter involved in silicon transport in shoots. In the nodes, involved with LSI2 and NIP2-2/LSI6 in silicon intervascular transfer, which is required for the preferential distribution of silicon, such as hyperaccumulation of silicon in the husk. Silicon is beneficial to plant growth and helps plants to overcome abiotic and biotic stresses by preventing lodging (falling over) and increasing resistance to pests and diseases, as well as other stresses. The sequence is that of Silicon efflux transporter LSI3 from Oryza sativa subsp. japonica (Rice).